The following is a 130-amino-acid chain: Fluoride-specific ion channel FluC (130 aa).

A run of 4 helical transmembrane segments spans residues 10–30 (FAVA…SLWF), 41–61 (GTLI…TVAM), 72–89 (LLFG…STYE), and 105–125 (LVYW…GILL). Na(+)-binding residues include glycine 80 and threonine 83.

It belongs to the fluoride channel Fluc/FEX (TC 1.A.43) family.

Its subcellular location is the cell inner membrane. It carries out the reaction fluoride(in) = fluoride(out). Its activity is regulated as follows. Na(+) is not transported, but it plays an essential structural role and its presence is essential for fluoride channel function. Functionally, fluoride-specific ion channel. Important for reducing fluoride concentration in the cell, thus reducing its toxicity. The polypeptide is Fluoride-specific ion channel FluC (Synechococcus sp. (strain JA-2-3B'a(2-13)) (Cyanobacteria bacterium Yellowstone B-Prime)).